Here is an 80-residue protein sequence, read N- to C-terminus: Calmodulin (80 aa).

EF-hand domains are found at residues 12 to 47 (DSEEEIREAFRVFDKDGNGFISAAELRHVMTNLGEK) and 48 to 80 (LTDEEVDEMIREADIDGDGQVNYEEFVAMMTSK). Positions 25, 27, 29, 36, 61, 63, 65, 67, and 72 each coordinate Ca(2+).

This sequence belongs to the calmodulin family.

In terms of biological role, calmodulin mediates the control of a large number of enzymes, ion channels and other proteins by Ca(2+). Among the enzymes to be stimulated by the calmodulin-Ca(2+) complex are a number of protein kinases and phosphatases. The chain is Calmodulin from Strongylocentrotus purpuratus (Purple sea urchin).